Consider the following 619-residue polypeptide: Dihydroxy-acid dehydratase (619 aa).

Asp81 contributes to the Mg(2+) binding site. Cys122 is a [2Fe-2S] cluster binding site. 2 residues coordinate Mg(2+): Asp123 and Lys124. Residue Lys124 is modified to N6-carboxylysine. [2Fe-2S] cluster is bound at residue Cys195. Glu494 serves as a coordination point for Mg(2+). Ser520 acts as the Proton acceptor in catalysis.

The protein belongs to the IlvD/Edd family. As to quaternary structure, homodimer. The cofactor is [2Fe-2S] cluster. Mg(2+) is required as a cofactor.

It catalyses the reaction (2R)-2,3-dihydroxy-3-methylbutanoate = 3-methyl-2-oxobutanoate + H2O. It carries out the reaction (2R,3R)-2,3-dihydroxy-3-methylpentanoate = (S)-3-methyl-2-oxopentanoate + H2O. It participates in amino-acid biosynthesis; L-isoleucine biosynthesis; L-isoleucine from 2-oxobutanoate: step 3/4. Its pathway is amino-acid biosynthesis; L-valine biosynthesis; L-valine from pyruvate: step 3/4. Its function is as follows. Functions in the biosynthesis of branched-chain amino acids. Catalyzes the dehydration of (2R,3R)-2,3-dihydroxy-3-methylpentanoate (2,3-dihydroxy-3-methylvalerate) into 2-oxo-3-methylpentanoate (2-oxo-3-methylvalerate) and of (2R)-2,3-dihydroxy-3-methylbutanoate (2,3-dihydroxyisovalerate) into 2-oxo-3-methylbutanoate (2-oxoisovalerate), the penultimate precursor to L-isoleucine and L-valine, respectively. The protein is Dihydroxy-acid dehydratase of Shewanella sp. (strain ANA-3).